The primary structure comprises 384 residues: Guanine nucleotide-binding protein alpha-2 subunit (384 aa).

A disordered region spans residues 1–23 (MGLVCSRNRRYRDSDPEENAQAA). G2 carries the N-myristoyl glycine lipid modification. A lipid anchor (S-palmitoyl cysteine) is attached at C5. The region spanning 38–384 (HIQKLLLLGA…RRNLFEAGLL (347 aa)) is the G-alpha domain. Residues 41–54 (KLLLLGAGESGKST) form a G1 motif region. Residues E49, S50, G51, K52, S53, T54, D163, L188, Y189, T194, G222, N288, K289, D291, and A356 each coordinate GTP. S53 serves as a coordination point for Mg(2+). A G2 motif region spans residues 186–194 (DVLYARVRT). Position 194 (T194) interacts with Mg(2+). The tract at residues 215-224 (YRLFDVGGQR) is G3 motif. The G4 motif stretch occupies residues 284 to 291 (MLFLNKFD). The tract at residues 354-359 (TTALDQ) is G5 motif.

Belongs to the G-alpha family. As to quaternary structure, g proteins are composed of 3 units; alpha, beta and gamma. The alpha chain contains the guanine nucleotide binding site. The cofactor is Mg(2+).

Functionally, guanine nucleotide-binding proteins (G proteins) are involved as modulators or transducers in various transmembrane signaling systems. The protein is Guanine nucleotide-binding protein alpha-2 subunit (GPA2) of Pisum sativum (Garden pea).